The primary structure comprises 151 residues: Large ribosomal subunit protein bL9 (151 aa).

This sequence belongs to the bacterial ribosomal protein bL9 family.

Its function is as follows. Binds to the 23S rRNA. The sequence is that of Large ribosomal subunit protein bL9 from Chlorobium phaeovibrioides (strain DSM 265 / 1930) (Prosthecochloris vibrioformis (strain DSM 265)).